Consider the following 216-residue polypeptide: Uracil phosphoribosyltransferase (216 aa).

5-phospho-alpha-D-ribose 1-diphosphate contacts are provided by residues arginine 85, arginine 110, and 135-143 (DPMVATGYS). Residues isoleucine 200 and 205-207 (GDA) each bind uracil. Aspartate 206 contributes to the 5-phospho-alpha-D-ribose 1-diphosphate binding site.

This sequence belongs to the UPRTase family. Mg(2+) is required as a cofactor.

It catalyses the reaction UMP + diphosphate = 5-phospho-alpha-D-ribose 1-diphosphate + uracil. The protein operates within pyrimidine metabolism; UMP biosynthesis via salvage pathway; UMP from uracil: step 1/1. Its activity is regulated as follows. Allosterically activated by GTP. In terms of biological role, catalyzes the conversion of uracil and 5-phospho-alpha-D-ribose 1-diphosphate (PRPP) to UMP and diphosphate. This chain is Uracil phosphoribosyltransferase, found in Burkholderia mallei (strain NCTC 10247).